A 598-amino-acid chain; its full sequence is Elongation factor 4 (598 aa).

The tr-type G domain occupies Asp4–Lys186. GTP-binding positions include Asp16–Thr21 and Asn133–Asp136.

It belongs to the TRAFAC class translation factor GTPase superfamily. Classic translation factor GTPase family. LepA subfamily.

It localises to the cell inner membrane. The catalysed reaction is GTP + H2O = GDP + phosphate + H(+). Functionally, required for accurate and efficient protein synthesis under certain stress conditions. May act as a fidelity factor of the translation reaction, by catalyzing a one-codon backward translocation of tRNAs on improperly translocated ribosomes. Back-translocation proceeds from a post-translocation (POST) complex to a pre-translocation (PRE) complex, thus giving elongation factor G a second chance to translocate the tRNAs correctly. Binds to ribosomes in a GTP-dependent manner. This is Elongation factor 4 from Magnetococcus marinus (strain ATCC BAA-1437 / JCM 17883 / MC-1).